We begin with the raw amino-acid sequence, 373 residues long: Indole glucosinolate O-methyltransferase 1 (373 aa).

5 residues coordinate S-adenosyl-L-homocysteine: Gly217, Asp240, Asp260, Met261, and Lys274. The active-site Proton acceptor is the His278.

The protein belongs to the class I-like SAM-binding methyltransferase superfamily. Cation-independent O-methyltransferase family. Interacts with B'GAMMA.

It functions in the pathway secondary metabolite biosynthesis. Its function is as follows. Involved in indole glucosinolate biosynthesis. Catalyzes methoxylation reactions of the glucosinolate indole ring. Converts the hydroxy intermediates 4-hydroxy-indol-3-yl-methylglucosinolate (4OH-I3M) and 1-hydroxy-indol-3-yl-methylglucosinolate (1OH-I3M) to 4-methoxy-indol-3-yl-methylglucosinolate (4MO-I3M) and 1-methoxy-indol-3-yl-methylglucosinolate (1MO-I3M), respectively. This chain is Indole glucosinolate O-methyltransferase 1, found in Arabidopsis thaliana (Mouse-ear cress).